Consider the following 233-residue polypeptide: Large ribosomal subunit protein eL6x (233 aa).

Residues 48–72 show a composition bias toward basic and acidic residues; sequence HDAKSKVDAPVEKPPKFYPAEDVKK. The interval 48-80 is disordered; sequence HDAKSKVDAPVEKPPKFYPAEDVKKPLPNRRTA.

The protein belongs to the eukaryotic ribosomal protein eL6 family.

The sequence is that of Large ribosomal subunit protein eL6x (RPL6C) from Arabidopsis thaliana (Mouse-ear cress).